Reading from the N-terminus, the 872-residue chain is Alanine--tRNA ligase (872 aa).

Residues His-566, His-570, Cys-668, and His-672 each coordinate Zn(2+).

It belongs to the class-II aminoacyl-tRNA synthetase family. Zn(2+) is required as a cofactor.

The protein resides in the cytoplasm. It carries out the reaction tRNA(Ala) + L-alanine + ATP = L-alanyl-tRNA(Ala) + AMP + diphosphate. In terms of biological role, catalyzes the attachment of alanine to tRNA(Ala) in a two-step reaction: alanine is first activated by ATP to form Ala-AMP and then transferred to the acceptor end of tRNA(Ala). Also edits incorrectly charged Ser-tRNA(Ala) and Gly-tRNA(Ala) via its editing domain. The sequence is that of Alanine--tRNA ligase from Lactococcus lactis subsp. cremoris (strain MG1363).